A 235-amino-acid polypeptide reads, in one-letter code: Phosphoribosylaminoimidazole-succinocarboxamide synthase (235 aa).

Belongs to the SAICAR synthetase family.

The enzyme catalyses 5-amino-1-(5-phospho-D-ribosyl)imidazole-4-carboxylate + L-aspartate + ATP = (2S)-2-[5-amino-1-(5-phospho-beta-D-ribosyl)imidazole-4-carboxamido]succinate + ADP + phosphate + 2 H(+). It participates in purine metabolism; IMP biosynthesis via de novo pathway; 5-amino-1-(5-phospho-D-ribosyl)imidazole-4-carboxamide from 5-amino-1-(5-phospho-D-ribosyl)imidazole-4-carboxylate: step 1/2. The polypeptide is Phosphoribosylaminoimidazole-succinocarboxamide synthase (Clostridium beijerinckii (strain ATCC 51743 / NCIMB 8052) (Clostridium acetobutylicum)).